The chain runs to 340 residues: GTPase Obg (340 aa).

One can recognise an Obg domain in the interval 1–158 (MSFIDEAKIY…KHIILKLKII (158 aa)). In terms of domain architecture, OBG-type G spans 159–325 (SDVGIIGLPN…LSTLIKQIHK (167 aa)). Residues 165 to 172 (GLPNAGKS), 190 to 194 (FTTLE), 211 to 214 (DIPG), 278 to 281 (NKSD), and 306 to 308 (SSI) contribute to the GTP site. Residues Ser172 and Thr192 each contribute to the Mg(2+) site.

The protein belongs to the TRAFAC class OBG-HflX-like GTPase superfamily. OBG GTPase family. Monomer. Requires Mg(2+) as cofactor.

It is found in the cytoplasm. Its function is as follows. An essential GTPase which binds GTP, GDP and possibly (p)ppGpp with moderate affinity, with high nucleotide exchange rates and a fairly low GTP hydrolysis rate. Plays a role in control of the cell cycle, stress response, ribosome biogenesis and in those bacteria that undergo differentiation, in morphogenesis control. This Ehrlichia canis (strain Jake) protein is GTPase Obg.